We begin with the raw amino-acid sequence, 288 residues long: 4-diphosphocytidyl-2-C-methyl-D-erythritol kinase (288 aa).

K8 is a catalytic residue. ATP is bound at residue 92-102 (PVAAGMAGGST). Residue D134 is part of the active site.

It belongs to the GHMP kinase family. IspE subfamily.

The catalysed reaction is 4-CDP-2-C-methyl-D-erythritol + ATP = 4-CDP-2-C-methyl-D-erythritol 2-phosphate + ADP + H(+). It participates in isoprenoid biosynthesis; isopentenyl diphosphate biosynthesis via DXP pathway; isopentenyl diphosphate from 1-deoxy-D-xylulose 5-phosphate: step 3/6. Catalyzes the phosphorylation of the position 2 hydroxy group of 4-diphosphocytidyl-2C-methyl-D-erythritol. The polypeptide is 4-diphosphocytidyl-2-C-methyl-D-erythritol kinase (Clostridium perfringens (strain SM101 / Type A)).